A 139-amino-acid polypeptide reads, in one-letter code: Large-conductance mechanosensitive channel (139 aa).

Transmembrane regions (helical) follow at residues 17–37 (VVDMAVGVIIGGAFGKIVTSL) and 88–108 (TVDFLILAFVIFLMIKAIMAA).

This sequence belongs to the MscL family. In terms of assembly, homopentamer.

It is found in the cell inner membrane. In terms of biological role, channel that opens in response to stretch forces in the membrane lipid bilayer. May participate in the regulation of osmotic pressure changes within the cell. The sequence is that of Large-conductance mechanosensitive channel from Porphyromonas gingivalis (strain ATCC 33277 / DSM 20709 / CIP 103683 / JCM 12257 / NCTC 11834 / 2561).